A 491-amino-acid polypeptide reads, in one-letter code: Transmembrane protein 200A (491 aa).

The Cytoplasmic segment spans residues 1-61 (MIATGGVITG…RGKIRLYSPS (61 aa)). Residues 16–41 (RQDSARSQQHVNLSPSPATQEKKPIR) are disordered. Positions 20 to 34 (ARSQQHVNLSPSPAT) are enriched in polar residues. The helical transmembrane segment at 62 to 82 (GFFLILGVLISIIGIAMAVLG) threads the bilayer. Over 83–126 (YWPQKEHFIDAETTLSTNETQVIRNEGGVVVRFFEQHLHSDKMK) the chain is Extracellular. N-linked (GlcNAc...) asparagine glycosylation occurs at N100. A helical transmembrane segment spans residues 127 to 147 (MLGPFTMGIGIFIFICANAIL). Residues 148–491 (HENRDKETKI…LKRGTSETRF (344 aa)) lie on the Cytoplasmic side of the membrane. S350 carries the phosphoserine modification.

It belongs to the TMEM200 family. As to expression, expressed in cerebellum.

The protein localises to the membrane. The sequence is that of Transmembrane protein 200A (TMEM200A) from Homo sapiens (Human).